Consider the following 144-residue polypeptide: Flagellar assembly factor FliW (144 aa).

It belongs to the FliW family. In terms of assembly, interacts with translational regulator CsrA and flagellin(s).

The protein resides in the cytoplasm. Acts as an anti-CsrA protein, binds CsrA and prevents it from repressing translation of its target genes, one of which is flagellin. Binds to flagellin and participates in the assembly of the flagellum. This is Flagellar assembly factor FliW from Geobacillus sp. (strain WCH70).